The following is an 813-amino-acid chain: Valine--tRNA ligase (813 aa).

The short motif at 46-56 is the 'HIGH' region element; the sequence is PTVSGQLHIGH. Positions 536–540 match the 'KMSKS' region motif; that stretch reads KMSKS. Position 539 (Lys-539) interacts with ATP.

The protein belongs to the class-I aminoacyl-tRNA synthetase family. ValS type 2 subfamily. In terms of assembly, monomer.

Its subcellular location is the cytoplasm. It catalyses the reaction tRNA(Val) + L-valine + ATP = L-valyl-tRNA(Val) + AMP + diphosphate. Its function is as follows. Catalyzes the attachment of valine to tRNA(Val). As ValRS can inadvertently accommodate and process structurally similar amino acids such as threonine, to avoid such errors, it has a 'posttransfer' editing activity that hydrolyzes mischarged Thr-tRNA(Val) in a tRNA-dependent manner. This Rickettsia canadensis (strain McKiel) protein is Valine--tRNA ligase.